The chain runs to 359 residues: Prostaglandin F2-alpha receptor (359 aa).

The Extracellular segment spans residues 1-31; it reads MSMNNSKQLVSPAAALLSNTTCQTENRLSVF. N-linked (GlcNAc...) asparagine glycans are attached at residues asparagine 4 and asparagine 19. Residues 32 to 54 traverse the membrane as a helical segment; sequence FSVIFMTVGILSNSLAIAILMKA. The Cytoplasmic portion of the chain corresponds to 55–69; that stretch reads YQRFRQKSKASFLLL. The chain crosses the membrane as a helical span at residues 70-90; sequence ASGLVITDFFGHLINGAIAVF. Over 91-109 the chain is Extracellular; the sequence is VYASDKEWIRFDQSNVLCS. Cysteines 108 and 186 form a disulfide. A helical transmembrane segment spans residues 110–131; the sequence is IFGICMVFSGLCPLLLGSVMAI. Residues 132-152 lie on the Cytoplasmic side of the membrane; sequence ERCIGVTKPIFHSTKITSKHV. The helical transmembrane segment at 153-175 threads the bilayer; it reads KMMLSGVCLFAVFIALLPILGHR. The Extracellular portion of the chain corresponds to 176–198; the sequence is DYKIQASRTWCFYNTEDIKDWED. The helical transmembrane segment at 199-224 threads the bilayer; the sequence is RFYLLLFSFLGLLALGVSLLCNAITG. The Cytoplasmic portion of the chain corresponds to 225 to 250; the sequence is ITLLRVKFKSQQHRQGRSHHLEMVIQ. The chain crosses the membrane as a helical span at residues 251-267; sequence LLAIMCVSCICWSPFLV. The Extracellular segment spans residues 268–285; sequence TMANIGINGNHSLETCET. The chain crosses the membrane as a helical span at residues 286-307; it reads TLFALRMATWNQILDPWVYILL. The Cytoplasmic segment spans residues 308-359; the sequence is RKAVLKNLYKLASQCCGVHVISLHIWELSSIKNSLKVAAISESPVAEKSAST.

Belongs to the G-protein coupled receptor 1 family. As to quaternary structure, isoform 1 can form heterodimers with isoform 5 (and probably other isoforms). As to expression, eye.

It localises to the cell membrane. Its function is as follows. Receptor for prostaglandin F2-alpha (PGF2-alpha). The activity of this receptor is mediated by G proteins which activate a phosphatidylinositol-calcium second messenger system. Initiates luteolysis in the corpus luteum. Isoforms 2 to 7 do not bind PGF2-alpha but are proposed to modulate signaling by participating in variant receptor complexes; heterodimers between isoform 1 and isoform 5 are proposed to be a receptor for prostamides including the synthetic analog bimatoprost. The polypeptide is Prostaglandin F2-alpha receptor (PTGFR) (Homo sapiens (Human)).